A 352-amino-acid chain; its full sequence is MDYQVSSPTYDIDYYTSEPCQKTNVKQIAARLLPPLYSLVFIFGFVGNMLVILILINCKRLKSMTDIYLLNLAISDLFFLLTVPFWAHYAAAQWDFGNTMCQLLTGLYFIGFFSGIFFIILLTIDRYLAIVHAVFALKARTVTFGVVTSVITWVVAVFASLPGIIFTRSQKEGLHYTCSSHFPYSQYQFWKNFQTLKIVILGLVLPLLVMVICYSGILKTLLRCRNEKKRHRAVRLIFTIMIVYFLFWAPYNIVLLLNTFQEFFGLNNCSSSNRLDQAMQVTETLGMTHCCINPIIYAFVGEKFRNYLLVFFQKHIAKRFCKCCSIFQQEAPERASSVYTRSTGEQEISVGL.

Topologically, residues 1-30 (MDYQVSSPTYDIDYYTSEPCQKTNVKQIAA) are extracellular. Y3 bears the Sulfotyrosine mark. Residues S6 and S7 are each glycosylated (O-linked (GalNAc...) serine). A sulfotyrosine mark is found at Y10, Y14, and Y15. 2 cysteine pairs are disulfide-bonded: C20–C269 and C101–C178. A helical transmembrane segment spans residues 31–58 (RLLPPLYSLVFIFGFVGNMLVILILINC). Topologically, residues 59–68 (KRLKSMTDIY) are cytoplasmic. The helical transmembrane segment at 69 to 89 (LLNLAISDLFFLLTVPFWAHY) threads the bilayer. The Extracellular portion of the chain corresponds to 90–102 (AAAQWDFGNTMCQ). Residues 103–124 (LLTGLYFIGFFSGIFFIILLTI) traverse the membrane as a helical segment. Topologically, residues 125–141 (DRYLAIVHAVFALKART) are cytoplasmic. Residues 142–166 (VTFGVVTSVITWVVAVFASLPGIIF) form a helical membrane-spanning segment. Over 167–198 (TRSQKEGLHYTCSSHFPYSQYQFWKNFQTLKI) the chain is Extracellular. The chain crosses the membrane as a helical span at residues 199–218 (VILGLVLPLLVMVICYSGIL). Over 219 to 235 (KTLLRCRNEKKRHRAVR) the chain is Cytoplasmic. The helical transmembrane segment at 236 to 260 (LIFTIMIVYFLFWAPYNIVLLLNTF) threads the bilayer. Residues 261 to 277 (QEFFGLNNCSSSNRLDQ) lie on the Extracellular side of the membrane. A helical membrane pass occupies residues 278–301 (AMQVTETLGMTHCCINPIIYAFVG). Residues 302-352 (EKFRNYLLVFFQKHIAKRFCKCCSIFQQEAPERASSVYTRSTGEQEISVGL) are Cytoplasmic-facing. S-palmitoyl cysteine attachment occurs at residues C321, C323, and C324. 4 positions are modified to phosphoserine; by BARK1: S336, S337, S342, and S349.

The protein belongs to the G-protein coupled receptor 1 family. In terms of assembly, interacts with PRAF2. Efficient ligand binding to CCL3/MIP-1alpha and CCL4/MIP-1beta requires sulfation, O-glycosylation and sialic acid modifications. Glycosylation on Ser-6 is required for efficient binding of CCL4. Interacts with GRK2. Interacts with ARRB1 and ARRB2. Interacts with CNIH4. Interacts with S100A4; this interaction stimulates T-lymphocyte chemotaxis. In terms of processing, sulfated on at least 2 of the N-terminal tyrosines. Sulfation is required for efficient binding of the chemokines, CCL3 and CCL4. Palmitoylation in the C-terminal is important for cell surface expression. Post-translationally, phosphorylation on serine residues in the C-terminal is stimulated by binding CC chemokines especially by APO-RANTES. In terms of processing, O-glycosylated, but not N-glycosylated. Ser-6 appears to be the major site even if Ser-7 may be also O-glycosylated. Also sialylated glycans present which contribute to chemokine binding. Thr-16 and Ser-17 may also be glycosylated and, if so, with small moieties such as a T-antigen.

It is found in the cell membrane. Functionally, receptor for a number of inflammatory CC-chemokines including CCL3/MIP-1-alpha, CCL4/MIP-1-beta and RANTES and subsequently transduces a signal by increasing the intracellular calcium ion level. May play a role in the control of granulocytic lineage proliferation or differentiation. Participates in T-lymphocyte migration to the infection site by acting as a chemotactic receptor. The chain is C-C chemokine receptor type 5 (CCR5) from Gorilla gorilla gorilla (Western lowland gorilla).